Reading from the N-terminus, the 383-residue chain is U-box domain-containing protein 63 (383 aa).

The tract at residues 166–186 is disordered; the sequence is PDGNVSNSHRNTQQKRDFASV. The 73-residue stretch at 201–273 folds into the U-box domain; the sequence is SLKAILSDPV…HAFRQEEDSD (73 aa).

The catalysed reaction is S-ubiquitinyl-[E2 ubiquitin-conjugating enzyme]-L-cysteine + [acceptor protein]-L-lysine = [E2 ubiquitin-conjugating enzyme]-L-cysteine + N(6)-ubiquitinyl-[acceptor protein]-L-lysine.. The protein operates within protein modification; protein ubiquitination. Functions as an E3 ubiquitin ligase. This chain is U-box domain-containing protein 63 (PUB63), found in Arabidopsis thaliana (Mouse-ear cress).